An 862-amino-acid chain; its full sequence is Eukaryotic translation initiation factor 3 subunit C (862 aa).

The segment at methionine 1–lysine 81 is disordered. Positions serine 17–glutamate 54 are enriched in acidic residues. The segment covering threonine 55 to alanine 65 has biased composition (basic and acidic residues). Over residues serine 66–glutamate 75 the composition is skewed to acidic residues. In terms of domain architecture, PCI spans phenylalanine 600–glutamate 774. Positions arginine 813–alanine 862 are disordered. Gly residues predominate over residues glycine 818 to alanine 862.

This sequence belongs to the eIF-3 subunit C family. As to quaternary structure, component of the eukaryotic translation initiation factor 3 (eIF-3) complex.

Its subcellular location is the cytoplasm. Functionally, component of the eukaryotic translation initiation factor 3 (eIF-3) complex, which is involved in protein synthesis of a specialized repertoire of mRNAs and, together with other initiation factors, stimulates binding of mRNA and methionyl-tRNAi to the 40S ribosome. The eIF-3 complex specifically targets and initiates translation of a subset of mRNAs involved in cell proliferation. This chain is Eukaryotic translation initiation factor 3 subunit C (nip1), found in Aspergillus fumigatus (strain CBS 144.89 / FGSC A1163 / CEA10) (Neosartorya fumigata).